A 491-amino-acid chain; its full sequence is Carboxypeptidase SOL1 (491 aa).

The signal sequence occupies residues 1–25 (MSKLRFFQSLLISTVICFFLPSINA). Over 26–452 (RGGHSDHIHP…LLTQFFTETN (427 aa)) the chain is Extracellular. Asn-39 carries an N-linked (GlcNAc...) asparagine glycan. Residues 64–338 (GYMTNDDLEK…KSMLNLVASL (275 aa)) form the Peptidase M14 domain. Zn(2+)-binding residues include His-125 and Glu-128. Residues 125-128 (HGDE) and 186-187 (NR) contribute to the substrate site. A Zn(2+)-binding site is contributed by His-226. Asn-268 carries an N-linked (GlcNAc...) asparagine glycan. Substrate is bound at residue Tyr-286. Catalysis depends on Glu-308, which acts as the Proton donor/acceptor. Residues 453 to 470 (NGITLTLFVVVVFLCFLL) traverse the membrane as a helical segment. Residues 471–491 (QRRVRFNLWKQRQSSRRSITV) are Cytoplasmic-facing.

This sequence belongs to the peptidase M14 family. Requires Zn(2+) as cofactor. Expressed in roots, shoots, leaves, flowers and siliques.

The protein localises to the endosome membrane. In terms of biological role, possesses in vitro carboxypeptidase activity against the C-terminal arginine and lysine residues. Involved in the maturation of CLE19. Removes the C-terminal arginine residue of CLE19 proprotein. The cleavage of the C-terminal arginine residue is necessary for CLE19 activity in vivo. Is not involved in generating active CLV3. Is not involved in CLE19 or CLV3 perception. This Arabidopsis thaliana (Mouse-ear cress) protein is Carboxypeptidase SOL1.